The chain runs to 29 residues: Cyclotide cter-K (29 aa).

A cross-link (cyclopeptide (His-Asn)) is located at residues 1–29 (HEPCGESCVFIPCITTVVGCSCKNKVCYN). Disulfide bonds link Cys4-Cys20, Cys8-Cys22, and Cys13-Cys27.

Contains 3 disulfide bonds. Post-translationally, this is a cyclic peptide.

Its function is as follows. Probably participates in a plant defense mechanism. In Clitoria ternatea (Butterfly pea), this protein is Cyclotide cter-K.